The following is a 410-amino-acid chain: Adenosine receptor A2a (410 aa).

The Extracellular portion of the chain corresponds to 1–4 (MGSS). A helical transmembrane segment spans residues 5–29 (VYIMVELAIAVLAILGNVLVCWAVW). Residues 30 to 39 (INSNLQNVTN) are Cytoplasmic-facing. The helical transmembrane segment at 40–63 (FFVVSLAAADIAVGVLAIPFAITI) threads the bilayer. Over 64–74 (STGFCAACHGC) the chain is Extracellular. Intrachain disulfides connect Cys68–Cys154, Cys71–Cys143, and Cys74–Cys161. A helical transmembrane segment spans residues 75-97 (LFFACFVLVLTQSSIFSLLAIAI). Topologically, residues 98 to 117 (DRYIAIRIPLRYNGLVTGMR) are cytoplasmic. Residues 118–140 (AKGIIAICWVLSFAIGLTPMLGW) traverse the membrane as a helical segment. At 141-168 (NNCSQKDENSTKTCGEGRVTCLFEDVVP) the chain is on the extracellular side. N-linked (GlcNAc...) asparagine glycosylation is found at Asn142 and Asn149. Glu164 lines the adenosine pocket. Residues 169–193 (MNYMVYYNFFAFVLLPLLLMLAIYL) form a helical membrane-spanning segment. Residues 194–229 (RIFLAARRQLKQMESQPLPGERTRSTLQKEVHAAKS) lie on the Cytoplasmic side of the membrane. A helical transmembrane segment spans residues 230 to 253 (LAIIVGLFALCWLPLHIINCFTFF). Asn248 contributes to the adenosine binding site. A disulfide bridge links Cys254 with Cys257. Residues 254–261 (CSTCQHAP) are Extracellular-facing. A helical membrane pass occupies residues 262-285 (PWLMYLAIILSHSNSVVNPFIYAY). 2 residues coordinate adenosine: Ser272 and His273. Topologically, residues 286–410 (RIREFRQTFR…ASWSSEFAPS (125 aa)) are cytoplasmic. The interaction with GAS2L2 stretch occupies residues 322 to 410 (HSTEGEQVSL…ASWSSEFAPS (89 aa)). The interval 342 to 410 (ANGSAPHSGR…ASWSSEFAPS (69 aa)) is disordered. The span at 377–389 (TQEHQEGQEHPGL) shows a compositional bias: basic and acidic residues. Over residues 401 to 410 (ASWSSEFAPS) the composition is skewed to polar residues.

This sequence belongs to the G-protein coupled receptor 1 family. As to quaternary structure, interacts (via cytoplasmic C-terminal domain) with USP4; the interaction is direct. May interact with DRD4. Interacts with NECAB2. Interacts (via cytoplasmic C-terminal domain) with GAS2L2; interaction enhances receptor-mediated adenylyl cyclase activity. Post-translationally, ubiquitinated. Deubiquitinated by USP4; leading to stabilization and expression at the cell surface.

It is found in the cell membrane. Its function is as follows. Receptor for adenosine. The activity of this receptor is mediated by G proteins which activate adenylyl cyclase. The polypeptide is Adenosine receptor A2a (Adora2a) (Mus musculus (Mouse)).